A 1683-amino-acid polypeptide reads, in one-letter code: Genome polyprotein (1683 aa).

The Extracellular segment spans residues 1 to 445 (MRCIGISNRD…LHQVFGAIYG (445 aa)). Intrachain disulfides connect C3/C30, C60/C121, C74/C105, and C92/C116. A glycan (N-linked (GlcNAc...) asparagine; by host) is linked at N67. A fusion peptide region spans residues 98 to 111 (DRGWGNGCGLFGKG). An N-linked (GlcNAc...) asparagine; by host glycan is attached at N153. 2 disulfides stabilise this stretch: C185–C285 and C302–C333. Residues 446 to 466 (AAFSGVSWTMKILIGVIITWI) form a helical membrane-spanning segment. The Cytoplasmic portion of the chain corresponds to 467–472 (GMNSRS). A helical transmembrane segment spans residues 473–493 (TSLSVSLVLVGIVTLYLGVMV). Residues 494 to 915 (QADSGCVVSW…MVGATMTDDI (422 aa)) lie on the Extracellular side of the membrane. 6 disulfides stabilise this stretch: C499/C510, C550/C638, C674/C718, C775/C824, C786/C808, and C807/C811. The N-linked (GlcNAc...) asparagine; by host glycan is linked to N702. Residues 916–940 (GMGVTYLALLAAFRVRPTFAAGLLL) form a helical membrane-spanning segment. Topologically, residues 941-946 (RKLTSK) are cytoplasmic. A helical membrane pass occupies residues 947-965 (ELMMTTIGIVLLSQSSIPE). Over 966–989 (TILELTDALALGMMVLKMVRNMEK) the chain is Lumenal. Residues 990–1010 (YQLAVTIMAILCVPNAVILQN) traverse the membrane as a helical segment. Residue A1011 is a topological domain, cytoplasmic. Residues 1012-1030 (WKVSCTILAVVSVSPLLLT) form a helical membrane-spanning segment. The Lumenal portion of the chain corresponds to 1031–1037 (SSQQKAD). The helical transmembrane segment at 1038-1058 (WIPLALTIKGLNPTAIFLTTL) threads the bilayer. Residues 1059–1683 (SRTSKKRAGV…EFKEFAAGRK (625 aa)) lie on the Cytoplasmic side of the membrane. In terms of domain architecture, Peptidase S7 spans 1066–1243 (AGVLWDVPSP…EKSIEDNPEI (178 aa)). Catalysis depends on charge relay system; for serine protease NS3 activity residues H1116, D1140, and S1200. One can recognise a Helicase ATP-binding domain in the interval 1245–1401 (DDIFRKRRLT…QSNAPIMDEE (157 aa)). An important for RNA-binding region spans residues 1249–1252 (RKRR). Residue 1258 to 1265 (LHPGAGKT) coordinates ATP. The DEAH box signature appears at 1349-1352 (DEAH). In terms of domain architecture, Helicase C-terminal spans 1411 to 1582 (SGHEWVTDFK…IFEPEREKVD (172 aa)).

As to quaternary structure, capsid protein C: Homodimer. Interacts (via N-terminus) with host EXOC1 (via C-terminus); this interaction results in EXOC1 degradation through the proteasome degradation pathway. Protein prM: Forms heterodimers with envelope protein E in the endoplasmic reticulum and Golgi. In terms of assembly, homodimer; in the endoplasmic reticulum and Golgi. Interacts with protein prM. Interacts with non-structural protein 1. Homodimer; Homohexamer when secreted. Interacts with envelope protein E. As to quaternary structure, interacts (via N-terminus) with serine protease NS3. Non-structural protein 2B: Forms a heterodimer with serine protease NS3. May form homooligomers. In terms of assembly, forms a heterodimer with NS2B. Interacts with NS4B. Interacts with unphosphorylated RNA-directed RNA polymerase NS5; this interaction stimulates RNA-directed RNA polymerase NS5 guanylyltransferase activity. Interacts with host SHFL. Specific enzymatic cleavages in vivo yield mature proteins. Cleavages in the lumen of endoplasmic reticulum are performed by host signal peptidase, wereas cleavages in the cytoplasmic side are performed by the Serine protease NS3. Signal cleavage at the 2K-4B site requires a prior NS3 protease-mediated cleavage at the 4A-2K site. Post-translationally, N-glycosylated. The excreted form is glycosylated and this is required for efficient secretion of the protein from infected cells. In terms of processing, N-glycosylated. Specific enzymatic cleavages in vivo yield mature proteins. Cleavages in the lumen of endoplasmic reticulum are performed by host signal peptidase, wereas cleavages in the cytoplasmic side are performed by serine protease NS3. Signal cleavage at the 2K-4B site requires a prior NS3 protease-mediated cleavage at the 4A-2K site.

Its subcellular location is the virion membrane. The protein localises to the host endoplasmic reticulum membrane. The protein resides in the secreted. The catalysed reaction is Selective hydrolysis of -Xaa-Xaa-|-Yaa- bonds in which each of the Xaa can be either Arg or Lys and Yaa can be either Ser or Ala.. It catalyses the reaction a ribonucleoside 5'-triphosphate + H2O = a ribonucleoside 5'-diphosphate + phosphate + H(+). The enzyme catalyses ATP + H2O = ADP + phosphate + H(+). Its function is as follows. Binds to host cell surface receptor and mediates fusion between viral and cellular membranes. Envelope protein is synthesized in the endoplasmic reticulum in the form of heterodimer with protein prM. They play a role in virion budding in the ER, and the newly formed immature particle is covered with 60 spikes composed of heterodimer between precursor prM and envelope protein E. The virion is transported to the Golgi apparatus where the low pH causes dissociation of PrM-E heterodimers and formation of E homodimers. prM-E cleavage is inefficient, and many virions are only partially matured. These uncleaved prM would play a role in immune evasion. In terms of biological role, involved in immune evasion, pathogenesis and viral replication. Once cleaved off the polyprotein, is targeted to three destinations: the viral replication cycle, the plasma membrane and the extracellular compartment. Essential for viral replication. Required for formation of the replication complex and recruitment of other non-structural proteins to the ER-derived membrane structures. Excreted as a hexameric lipoparticle that plays a role against host immune response. Antagonizing the complement function. Binds to the host macrophages and dendritic cells. Inhibits signal transduction originating from Toll-like receptor 3 (TLR3). Disrupts the host endothelial glycocalyx layer of host pulmonary microvascular endothelial cells, inducing degradation of sialic acid and shedding of heparan sulfate proteoglycans. NS1 induces expression of sialidases, heparanase, and activates cathepsin L, which activates heparanase via enzymatic cleavage. These effects are probably linked to the endothelial hyperpermeability observed in severe dengue disease. Functionally, component of the viral RNA replication complex that functions in virion assembly and antagonizes the host immune response. Its function is as follows. Serine protease subunit NS2B: Required cofactor for the serine protease function of NS3. May have membrane-destabilizing activity and form viroporins. In terms of biological role, displays three enzymatic activities: serine protease, NTPase and RNA helicase. NS3 serine protease, in association with NS2B, performs its autocleavage and cleaves the polyprotein at dibasic sites in the cytoplasm: C-prM, NS2A-NS2B, NS2B-NS3, NS3-NS4A, NS4A-2K and NS4B-NS5. NS3 RNA helicase binds RNA and unwinds dsRNA in the 3' to 5' direction. The polypeptide is Genome polyprotein (Aedimorphus (Red guenon)).